The sequence spans 517 residues: FAD-dependent monooxygenase FUP4 (517 aa).

An N-terminal signal peptide occupies residues 1 to 19 (MRQSSTLTWTSVLLAPLAA). The FAD-binding PCMH-type domain maps to 75-246 (QALRPACLVH…TRFDLDLYDQ (172 aa)). Histidine 112 carries the post-translational modification Pros-8alpha-FAD histidine. N-linked (GlcNAc...) asparagine glycans are attached at residues asparagine 163, asparagine 208, and asparagine 346.

Belongs to the oxygen-dependent FAD-linked oxidoreductase family. It depends on FAD as a cofactor.

It functions in the pathway secondary metabolite biosynthesis; terpenoid biosynthesis. Its function is as follows. FAD-dependent monooxygenase; part of the gene cluster that mediates the biosynthesis of the mycotoxin fusaproliferin (FUP) that belongs to the class of bicyclic sesterterpenoids. FUP4 catalyzes the oxidation of the hydroxy group at the C-16 position of preterpestacin III to a keto group, leading to the formation of (-)-terpestacin. The product of FUP1, preterpestacin I, might also serve as a substrate of FUP4 to yield oxo-preterpestacin I. The FUP biosynthetic pathway starts with the enzyme encoded by FUP1 that combines a C-terminal prenyltransferase domain responsible for the synthesis of geranylgeranyl diphosphate with the N-terminal terpene cyclase domain, to yield preterpestacin I. Preterpestacin I is then decorated by oxygenation steps that are catalyzed by two cytochrome P450 monooxygenases. First, FUP2 introduces a hydroxyl group at the C-24 position resulting in the formation of preterpestacin IIa. The second P450 monooxygenase catalyzes the hydroxylation at C-16 and C-17 of preterpestacin IIa, producing preterpestacin III. Subsequently, the FAD-dependent oxidoreductase FUP4 catalyzes the oxidation of the hydroxy group at the C-16 position to a keto group, leading to the formation of (-)-terpestacin, which is the immediate precursor of FUP. The final step in the proposed biosynthetic pathway is the addition of an acetyl group at the C-24 position of terpestacin, which is catalyzed by the acetyltransferase FUP5. This is FAD-dependent monooxygenase FUP4 from Fusarium proliferatum (strain ET1) (Orchid endophyte fungus).